Here is a 206-residue protein sequence, read N- to C-terminus: Synaptosomal-associated protein 25 (206 aa).

The segment covering 1 to 20 (MAEDADMRNELEEMQRRADQ) has biased composition (basic and acidic residues). The tract at residues 1–25 (MAEDADMRNELEEMQRRADQLADES) is disordered. Residues 1-75 (MAEDADMRNE…QINKDMKEAE (75 aa)) are interaction with CENPF. One can recognise a t-SNARE coiled-coil homology 1 domain in the interval 19 to 81 (DQLADESLES…KEAEKNSTDL (63 aa)). S-palmitoyl cysteine attachment occurs at residues C85, C88, C90, and C92. An interaction with ZDHHC17 region spans residues 111–120 (GVVASQPARV). The residue at position 138 (T138) is a Phosphothreonine. Positions 140–202 (DARENEMDEN…DEANQRATKM (63 aa)) constitute a t-SNARE coiled-coil homology 2 domain. A phosphoserine mark is found at S154 and S187.

This sequence belongs to the SNAP-25 family. Part of the SNARE core complex containing SNAP25, VAMP2 and STX1A; this complex binds CPLX1. Found in a complex containing SYT1, SV2B and syntaxin-1. Found in a ternary complex with STX1A and VAMP8. Interacts with HSC70 and with SYT9, forming a complex with DNAJC5. The interaction with SYT9 is inhibited in presence of calcium. Isoform 1 and isoform 2 interact with BLOC1S6. Interacts with CENPF. Interacts with EQTN. Interacts with HGS. Interacts with KCNB1 (via N-terminus); reduces the voltage-dependent potassium channel KCNB1 activity in pancreatic beta cells. Interacts with OTOF. Interacts with RIMS1. Interacts with SNAPIN. Interacts with STXBP6. Interacts with TRIM9. Interacts with ZDHHC13 (via ANK repeats). Interacts with ZDHHC17 (via ANK repeats). Associates with the BLOC-1 complex. Interacts with PLCL1 (via C2 domain). Interacts with PRRT2; this interaction may impair the formation of the SNARE complex. Interacts with alpha-synuclein/SNCA. Interacts with PRPH2. Interacts with ROM1. Interacts with STX3. Palmitoylated. Cys-85 appears to be the main site, and palmitoylation is required for membrane association.

The protein localises to the cytoplasm. It localises to the perinuclear region. It is found in the cell membrane. The protein resides in the synapse. Its subcellular location is the synaptosome. The protein localises to the photoreceptor inner segment. T-SNARE involved in the molecular regulation of neurotransmitter release. May play an important role in the synaptic function of specific neuronal systems. Associates with proteins involved in vesicle docking and membrane fusion. Regulates plasma membrane recycling through its interaction with CENPF. Modulates the gating characteristics of the delayed rectifier voltage-dependent potassium channel KCNB1 in pancreatic beta cells. This Pongo abelii (Sumatran orangutan) protein is Synaptosomal-associated protein 25 (SNAP25).